Consider the following 503-residue polypeptide: TGF-beta receptor type-1 (503 aa).

The signal sequence occupies residues 1-33 (MEAAVAAPRPRLLLLVLAAAAAAAAALLPGATA). Over 34-126 (LQCFCHLCTK…SSPGLGPVEL (93 aa)) the chain is Extracellular. Disulfide bonds link Cys36-Cys54, Cys38-Cys41, Cys48-Cys71, Cys86-Cys100, and Cys101-Cys106. Asn45 carries N-linked (GlcNAc...) asparagine glycosylation. A helical membrane pass occupies residues 127-147 (AAVIAGPVCFVCISLMLMVYI). Topologically, residues 148-503 (CHNRTVIHHR…QLSQQEGIKM (356 aa)) are cytoplasmic. Ser165 bears the Phosphoserine mark. One can recognise a GS domain in the interval 175–204 (TTLKDLIYDMTTSGSGSGLPLLVQRTIART). Phosphothreonine; by TGFBR2 occurs at positions 185 and 186. 3 positions are modified to phosphoserine; by TGFBR2: Ser187, Ser189, and Ser191. Positions 193-194 (LP) match the FKBP1A-binding motif. The 291-residue stretch at 205–495 (IVLQESIGKG…LRIKKTLSQL (291 aa)) folds into the Protein kinase domain. ATP contacts are provided by residues 211 to 219 (IGKGRFGEV) and Lys232. Lys268 participates in a covalent cross-link: Glycyl lysine isopeptide (Lys-Gly) (interchain with G-Cter in ubiquitin). The active-site Proton acceptor is the Asp333. Residue Lys391 forms a Glycyl lysine isopeptide (Lys-Gly) (interchain with G-Cter in SUMO) linkage.

It belongs to the protein kinase superfamily. TKL Ser/Thr protein kinase family. TGFB receptor subfamily. As to quaternary structure, homodimer; in the endoplasmic reticulum but also at the cell membrane. Heterohexamer; TGFB1, TGFB2 and TGFB3 homodimeric ligands assemble a functional receptor composed of two TGFBR1 and TGFBR2 heterodimers to form a ligand-receptor heterohexamer. The respective affinity of TGBRB1 and TGFBR2 for the ligands may modulate the kinetics of assembly of the receptor and may explain the different biological activities of TGFB1, TGFB2 and TGFB3. Component of a complex composed of TSC22D1 (via N-terminus), TGFBR1 and TGFBR2; the interaction between TSC22D1 and TGFBR1 is inhibited by SMAD7 and promoted by TGFB1. Interacts with CD109; inhibits TGF-beta receptor activation in keratinocytes. Interacts with RBPMS. Interacts (unphosphorylated) with FKBP1A; prevents TGFBR1 phosphorylation by TGFBR2 and stabilizes it in the inactive conformation. Interacts with SMAD2, SMAD3 and ZFYVE9; ZFYVE9 recruits SMAD2 and SMAD3 to the TGF-beta receptor. Interacts with TRAF6 and MAP3K7; induces MAP3K7 activation by TRAF6. Interacts with PARD6A; involved in TGF-beta induced epithelial to mesenchymal transition. Interacts with NEDD4L. Interacts with SMAD7, SMURF1 and SMURF2; SMAD7 recruits NEDD4L, SMURF1 and SMURF2 to the TGF-beta receptor. Interacts with USP15 and VPS39. Interacts with SDCBP (via C-terminus). Interacts with CAV1 and this interaction is impaired in the presence of SDCBP. Interacts with APPL1; interaction is TGF beta dependent; mediates trafficking of the TGFBR1 from the endosomes to the nucleus via microtubules in a TRAF6-dependent manner. Interacts with GPR50; this interaction promotes the constitutive activation of SMAD signaling pathway. The cofactor is Mg(2+). Mn(2+) serves as cofactor. In terms of processing, phosphorylated at basal levels in the absence of ligand. Activated upon phosphorylation by TGFBR2, mainly in the GS domain. Phosphorylation in the GS domain abrogates FKBP1A-binding. Post-translationally, N-Glycosylated. Ubiquitinated; undergoes ubiquitination catalyzed by several E3 ubiquitin ligases including SMURF1, SMURF2 and NEDD4L2. Results in the proteasomal and/or lysosomal degradation of the receptor thereby negatively regulating its activity. Deubiquitinated by USP15, leading to stabilization of the protein and enhanced TGF-beta signal. Its ubiquitination and proteasome-mediated degradation is negatively regulated by SDCBP. Ubiquitinated by BFAR via'Lys-63'-linked ubiquitination at Lys-268, leading to TGF-beta signaling activation. In terms of tissue distribution, found in all tissues examined, most abundant in placenta and least abundant in brain and heart. Expressed in a variety of cancer cell lines.

The protein resides in the cell membrane. The protein localises to the cell junction. It localises to the tight junction. Its subcellular location is the cell surface. It is found in the membrane raft. It carries out the reaction L-threonyl-[receptor-protein] + ATP = O-phospho-L-threonyl-[receptor-protein] + ADP + H(+). The catalysed reaction is L-seryl-[receptor-protein] + ATP = O-phospho-L-seryl-[receptor-protein] + ADP + H(+). Its activity is regulated as follows. Kept in an inactive conformation by FKBP1A preventing receptor activation in absence of ligand. CD109 is another inhibitor of the receptor. In terms of biological role, transmembrane serine/threonine kinase forming with the TGF-beta type II serine/threonine kinase receptor, TGFBR2, the non-promiscuous receptor for the TGF-beta cytokines TGFB1, TGFB2 and TGFB3. Transduces the TGFB1, TGFB2 and TGFB3 signal from the cell surface to the cytoplasm and is thus regulating a plethora of physiological and pathological processes including cell cycle arrest in epithelial and hematopoietic cells, control of mesenchymal cell proliferation and differentiation, wound healing, extracellular matrix production, immunosuppression and carcinogenesis. The formation of the receptor complex composed of 2 TGFBR1 and 2 TGFBR2 molecules symmetrically bound to the cytokine dimer results in the phosphorylation and the activation of TGFBR1 by the constitutively active TGFBR2. Activated TGFBR1 phosphorylates SMAD2 which dissociates from the receptor and interacts with SMAD4. The SMAD2-SMAD4 complex is subsequently translocated to the nucleus where it modulates the transcription of the TGF-beta-regulated genes. This constitutes the canonical SMAD-dependent TGF-beta signaling cascade. Also involved in non-canonical, SMAD-independent TGF-beta signaling pathways. For instance, TGFBR1 induces TRAF6 autoubiquitination which in turn results in MAP3K7 ubiquitination and activation to trigger apoptosis. Also regulates epithelial to mesenchymal transition through a SMAD-independent signaling pathway through PARD6A phosphorylation and activation. This chain is TGF-beta receptor type-1 (TGFBR1), found in Homo sapiens (Human).